A 302-amino-acid chain; its full sequence is Probable proteasome inhibitor (302 aa).

A2 is subject to N-acetylalanine. Disordered regions lie at residues 151–188 (LDGK…QIHP) and 259–302 (ARFD…SDFI). Residues 259–269 (ARFDPYGPPGV) show a composition bias toward pro residues.

It belongs to the proteasome inhibitor PI31 family.

Its function is as follows. Could play an important role in control of proteasome function. Inhibits the hydrolysis of protein and peptide substrates by the 20S proteasome. The polypeptide is Probable proteasome inhibitor (Arabidopsis thaliana (Mouse-ear cress)).